The sequence spans 306 residues: tRNA dimethylallyltransferase (306 aa).

2 to 9 (GPTASGKT) serves as a coordination point for ATP. Position 4–9 (4–9 (TASGKT)) interacts with substrate. Interaction with substrate tRNA regions lie at residues 27–30 (DSVQ) and 152–156 (QRIVR).

This sequence belongs to the IPP transferase family. In terms of assembly, monomer. Requires Mg(2+) as cofactor.

The enzyme catalyses adenosine(37) in tRNA + dimethylallyl diphosphate = N(6)-dimethylallyladenosine(37) in tRNA + diphosphate. Functionally, catalyzes the transfer of a dimethylallyl group onto the adenine at position 37 in tRNAs that read codons beginning with uridine, leading to the formation of N6-(dimethylallyl)adenosine (i(6)A). This Magnetococcus marinus (strain ATCC BAA-1437 / JCM 17883 / MC-1) protein is tRNA dimethylallyltransferase.